The following is a 250-amino-acid chain: tRNA (guanine-N(1)-)-methyltransferase (250 aa).

S-adenosyl-L-methionine contacts are provided by residues G112 and I132–L137.

This sequence belongs to the RNA methyltransferase TrmD family. As to quaternary structure, homodimer.

It is found in the cytoplasm. It catalyses the reaction guanosine(37) in tRNA + S-adenosyl-L-methionine = N(1)-methylguanosine(37) in tRNA + S-adenosyl-L-homocysteine + H(+). Its function is as follows. Specifically methylates guanosine-37 in various tRNAs. The polypeptide is tRNA (guanine-N(1)-)-methyltransferase (Marinomonas sp. (strain MWYL1)).